A 108-amino-acid chain; its full sequence is PTS system galactose-specific EIIB component (108 aa).

Residues 3-108 (DKVIALACAA…VLAAAENLMN (106 aa)) enclose the PTS EIIB type-3 domain. Residue Cys-10 is the Phosphocysteine intermediate of the active site. Cys-10 carries the post-translational modification Phosphocysteine; by EIIA.

It carries out the reaction N(pros)-phospho-L-histidyl-[protein] + D-galactose(out) = D-galactose 6-phosphate(in) + L-histidyl-[protein]. In terms of biological role, the phosphoenolpyruvate-dependent sugar phosphotransferase system (sugar PTS), a major carbohydrate active transport system, catalyzes the phosphorylation of incoming sugar substrates concomitantly with their translocation across the cell membrane. Involved in galactose transport with PtcA and Lmg_0963. In Lactococcus lactis subsp. cremoris (strain MG1363), this protein is PTS system galactose-specific EIIB component.